The chain runs to 517 residues: GMP synthase [glutamine-hydrolyzing] (517 aa).

The Glutamine amidotransferase type-1 domain occupies 11–202 (KIIVLDYGSQ…AFDVCHAEAN (192 aa)). The Nucleophile role is filled by cysteine 88. Catalysis depends on residues histidine 176 and glutamate 178. Residues 203–392 (WSMDDFITKQ…LGMPHSLVWR (190 aa)) form the GMPS ATP-PPase domain. 230-236 (SGGVDSS) is a binding site for ATP.

Homodimer.

It carries out the reaction XMP + L-glutamine + ATP + H2O = GMP + L-glutamate + AMP + diphosphate + 2 H(+). It functions in the pathway purine metabolism; GMP biosynthesis; GMP from XMP (L-Gln route): step 1/1. Its function is as follows. Catalyzes the synthesis of GMP from XMP. The protein is GMP synthase [glutamine-hydrolyzing] (guaA) of Lacticaseibacillus rhamnosus (Lactobacillus rhamnosus).